A 515-amino-acid polypeptide reads, in one-letter code: Maturase K (515 aa).

This sequence belongs to the intron maturase 2 family. MatK subfamily.

It localises to the plastid. It is found in the chloroplast. Usually encoded in the trnK tRNA gene intron. Probably assists in splicing its own and other chloroplast group II introns. The sequence is that of Maturase K from Picea abies (Norway spruce).